A 255-amino-acid chain; its full sequence is Proteasome subunit alpha (255 aa).

A compositionally biased stretch (polar residues) spans 190-201 (PSTSGASGNGET). Residues 190-255 (PSTSGASGNG…DKSSGDGEQN (66 aa)) form a disordered region. Residues 202–217 (EPSKLEVAILDRERPG) are compositionally biased toward basic and acidic residues.

The protein belongs to the peptidase T1A family. As to quaternary structure, the 20S proteasome core is composed of 14 alpha and 14 beta subunits that assemble into four stacked heptameric rings, resulting in a barrel-shaped structure. The two inner rings, each composed of seven catalytic beta subunits, are sandwiched by two outer rings, each composed of seven alpha subunits. The catalytic chamber with the active sites is on the inside of the barrel. Has a gated structure, the ends of the cylinder being occluded by the N-termini of the alpha-subunits. Is capped by the proteasome-associated ATPase, ARC.

Its subcellular location is the cytoplasm. Its pathway is protein degradation; proteasomal Pup-dependent pathway. Its activity is regulated as follows. The formation of the proteasomal ATPase ARC-20S proteasome complex, likely via the docking of the C-termini of ARC into the intersubunit pockets in the alpha-rings, may trigger opening of the gate for substrate entry. Interconversion between the open-gate and close-gate conformations leads to a dynamic regulation of the 20S proteasome proteolysis activity. In terms of biological role, component of the proteasome core, a large protease complex with broad specificity involved in protein degradation. The chain is Proteasome subunit alpha from Saccharomonospora viridis (strain ATCC 15386 / DSM 43017 / JCM 3036 / CCUG 5913 / NBRC 12207 / NCIMB 9602 / P101) (Thermoactinomyces viridis).